A 551-amino-acid chain; its full sequence is MEEAELVKGRLQAITDKRKIQEEISQKRLKIEEEKLKHQHLKKKALREKWLLDGIGSGKEHEEMRKQNQQDQHQTQVLEQSILRLEKEIQDLEKAELQISANEEAILKKLKSIEKTTEDIIRSVKVEKEENPEESIEDIYANIPDLPSSYIPSRLRKERNEGPDDEQNRKALYAMEIKVEKDLKTGESVVLSSIPLPSDDFKSTGIKVYEDRQKSVYAVSSNQNTTYNGTDGLAPVEVEDLLRQASERNSKSPTEYHEPVYANPFCRPVTPQRERVISPGPNFQERIMMKTNGLGNHANESAHNMTDGLSERRSNGPTHTSPTRPTPQPRSMVQQVEEMVHTQQKRMASPWEESSNRQNEHEVSPRMELSPSRASPGKSGPQCSSPTCQEETEDVRYNIVHSLPSDVDDTEPVTMIFMGYQQADDNEEEKKLLTGYDGVIHAELVVIDDEAEDNEGQTERPSYHPVAPYNQVYQPPKPTPLPRKRAEVRPYENTNHKSPHKNSISLKEQEERLGSPARHSPLDVPVAGDGTEDPSLTALRIRMAKLGKKVI.

An N-acetylmethionine modification is found at M1. A coiled-coil region spans residues 12 to 106 (QAITDKRKIQ…LQISANEEAI (95 aa)). A Glycyl lysine isopeptide (Lys-Gly) (interchain with G-Cter in SUMO2) cross-link involves residue K125. Residue S135 is modified to Phosphoserine. K178 is covalently cross-linked (Glycyl lysine isopeptide (Lys-Gly) (interchain with G-Cter in SUMO1); alternate). K178 participates in a covalent cross-link: Glycyl lysine isopeptide (Lys-Gly) (interchain with G-Cter in SUMO2); alternate. Basic and acidic residues predominate over residues 247–258 (ERNSKSPTEYHE). Residues 247–266 (ERNSKSPTEYHEPVYANPFC) form a disordered region. Phosphothreonine is present on T270. 2 disordered regions span residues 294-390 (LGNH…TCQE) and 451-533 (AEDN…GTED). A phosphoserine mark is found at S321 and S349. A compositionally biased stretch (polar residues) spans 341–353 (HTQQKRMASPWEE). Residues 354-365 (SSNRQNEHEVSP) show a composition bias toward basic and acidic residues. A phosphoserine mark is found at S370, S375, S384, S385, S498, S515, and S520.

This sequence belongs to the paralemmin family. In terms of assembly, interacts with GLUL. Post-translationally, phosphorylated. In terms of tissue distribution, ubiquitous. Expressed at highest levels in the heart and lung.

Its subcellular location is the cytoplasm. The protein localises to the cell projection. It localises to the dendrite. The protein resides in the dendritic spine. This is Palmdelphin (Palmd) from Mus musculus (Mouse).